Reading from the N-terminus, the 556-residue chain is Formate--tetrahydrofolate ligase (556 aa).

65–72 (TPAGEGKS) lines the ATP pocket.

It belongs to the formate--tetrahydrofolate ligase family.

It carries out the reaction (6S)-5,6,7,8-tetrahydrofolate + formate + ATP = (6R)-10-formyltetrahydrofolate + ADP + phosphate. It participates in one-carbon metabolism; tetrahydrofolate interconversion. The polypeptide is Formate--tetrahydrofolate ligase (Natranaerobius thermophilus (strain ATCC BAA-1301 / DSM 18059 / JW/NM-WN-LF)).